Reading from the N-terminus, the 201-residue chain is Recombination protein RecR (201 aa).

The C4-type zinc finger occupies 57–72 (CADCRTFTEQEKCNIC). A Toprim domain is found at 81–176 (GQICVVESPA…DASRIAHGVP (96 aa)).

The protein belongs to the RecR family.

In terms of biological role, may play a role in DNA repair. It seems to be involved in an RecBC-independent recombinational process of DNA repair. It may act with RecF and RecO. This is Recombination protein RecR from Cronobacter sakazakii (strain ATCC BAA-894) (Enterobacter sakazakii).